We begin with the raw amino-acid sequence, 136 residues long: NADH-ubiquinone oxidoreductase chain 3 (136 aa).

Transmembrane regions (helical) follow at residues 5–25 (TFFL…NLIF), 55–75 (ISFF…LLVY), and 85–105 (GIYG…GFAF).

The protein belongs to the complex I subunit 3 family.

The protein resides in the mitochondrion membrane. It catalyses the reaction a ubiquinone + NADH + 5 H(+)(in) = a ubiquinol + NAD(+) + 4 H(+)(out). In terms of biological role, core subunit of the mitochondrial membrane respiratory chain NADH dehydrogenase (Complex I) that is believed to belong to the minimal assembly required for catalysis. Complex I functions in the transfer of electrons from NADH to the respiratory chain. The immediate electron acceptor for the enzyme is believed to be ubiquinone. This is NADH-ubiquinone oxidoreductase chain 3 (nd3) from Emericella nidulans (Aspergillus nidulans).